Reading from the N-terminus, the 316-residue chain is 2,3-dihydroxyphenylpropionate/2,3-dihydroxicinnamic acid 1,2-dioxygenase (316 aa).

His115 acts as the Proton donor in catalysis. The active-site Proton acceptor is the His179.

Belongs to the LigB/MhpB extradiol dioxygenase family. In terms of assembly, homotetramer. The cofactor is Fe(2+).

The catalysed reaction is 3-(2,3-dihydroxyphenyl)propanoate + O2 = (2Z,4E)-2-hydroxy-6-oxonona-2,4-dienedioate + H(+). It catalyses the reaction (2E)-3-(2,3-dihydroxyphenyl)prop-2-enoate + O2 = (2Z,4E,7E)-2-hydroxy-6-oxonona-2,4,7-trienedioate + H(+). The protein operates within aromatic compound metabolism; 3-phenylpropanoate degradation. In terms of biological role, catalyzes the non-heme iron(II)-dependent oxidative cleavage of 2,3-dihydroxyphenylpropionic acid and 2,3-dihydroxicinnamic acid into 2-hydroxy-6-ketononadienedioate and 2-hydroxy-6-ketononatrienedioate, respectively. The protein is 2,3-dihydroxyphenylpropionate/2,3-dihydroxicinnamic acid 1,2-dioxygenase of Paraburkholderia xenovorans (strain LB400).